Consider the following 125-residue polypeptide: Snaclec VP12 subunit B (125 aa).

Disulfide bonds link cysteine 4-cysteine 15, cysteine 32-cysteine 121, and cysteine 98-cysteine 113. Positions 11–122 constitute a C-type lectin domain; sequence FEKYCYKVFQ…CNDPRYFVCK (112 aa).

The protein belongs to the snaclec family. As to quaternary structure, heterodimer of subunits alpha and beta; disulfide-linked. In terms of tissue distribution, expressed by the venom gland.

The protein localises to the secreted. Functionally, inhibits integrin alpha-2/beta-1- (ITGA2/ITGB1) dependent melanoma metastasis. The polypeptide is Snaclec VP12 subunit B (Daboia palaestinae (Palestine viper)).